A 41-amino-acid chain; its full sequence is Large ribosomal subunit protein bL36 (41 aa).

Residues 1 to 21 are disordered; it reads MKIRNSLKSLRGRHRDNQLVR.

This sequence belongs to the bacterial ribosomal protein bL36 family.

The chain is Large ribosomal subunit protein bL36 from Methylobacterium sp. (strain 4-46).